A 105-amino-acid chain; its full sequence is Serine protease inhibitor Kazal-type 8 (105 aa).

Positions 1–21 (MKVIFSVAVLVLASSVWTSLA) are cleaved as a signal peptide. Cystine bridges form between Cys44-Cys78, Cys51-Cys75, and Cys64-Cys96. The region spanning 44-98 (CIKNIQLCWILSYFKVSEPICGSNQVTYEGECHLCSGILYEDRTVIKVHDGPCEH) is the Kazal-like domain.

In terms of tissue distribution, expressed in epydiymis, in the cauda, corpus and caput.

The protein localises to the secreted. Probable serine protease inhibitor. In Mus musculus (Mouse), this protein is Serine protease inhibitor Kazal-type 8 (Spink8).